The primary structure comprises 290 residues: 4-hydroxy-tetrahydrodipicolinate synthase (290 aa).

Residue Ser44 participates in pyruvate binding. Tyr132 (proton donor/acceptor) is an active-site residue. Catalysis depends on Lys161, which acts as the Schiff-base intermediate with substrate. Val202 contributes to the pyruvate binding site.

It belongs to the DapA family. Homotetramer; dimer of dimers.

It is found in the cytoplasm. It catalyses the reaction L-aspartate 4-semialdehyde + pyruvate = (2S,4S)-4-hydroxy-2,3,4,5-tetrahydrodipicolinate + H2O + H(+). Its pathway is amino-acid biosynthesis; L-lysine biosynthesis via DAP pathway; (S)-tetrahydrodipicolinate from L-aspartate: step 3/4. Its function is as follows. Catalyzes the condensation of (S)-aspartate-beta-semialdehyde [(S)-ASA] and pyruvate to 4-hydroxy-tetrahydrodipicolinate (HTPA). The polypeptide is 4-hydroxy-tetrahydrodipicolinate synthase (Hydrogenobaculum sp. (strain Y04AAS1)).